A 343-amino-acid chain; its full sequence is Heat-inducible transcription repressor HrcA (343 aa).

The protein belongs to the HrcA family.

Its function is as follows. Negative regulator of class I heat shock genes (grpE-dnaK-dnaJ and groELS operons). Prevents heat-shock induction of these operons. The polypeptide is Heat-inducible transcription repressor HrcA (Phytoplasma mali (strain AT)).